The primary structure comprises 274 residues: Putative hydro-lyase Veis_4744 (274 aa).

It belongs to the D-glutamate cyclase family.

In Verminephrobacter eiseniae (strain EF01-2), this protein is Putative hydro-lyase Veis_4744.